We begin with the raw amino-acid sequence, 170 residues long: Flavodoxin (170 aa).

The 162-residue stretch at 4-165 (IGLFYGTQTG…RVKTWVSEIK (162 aa)) folds into the Flavodoxin-like domain.

It belongs to the flavodoxin family. The cofactor is FMN.

Its function is as follows. Low-potential electron donor to a number of redox enzymes. The sequence is that of Flavodoxin (isiB) from Synechocystis sp. (strain ATCC 27184 / PCC 6803 / Kazusa).